The sequence spans 482 residues: Glutamyl-tRNA(Gln) amidotransferase subunit A (482 aa).

Catalysis depends on charge relay system residues lysine 81 and serine 156. Residue serine 180 is the Acyl-ester intermediate of the active site.

Belongs to the amidase family. GatA subfamily. Heterotrimer of A, B and C subunits.

The catalysed reaction is L-glutamyl-tRNA(Gln) + L-glutamine + ATP + H2O = L-glutaminyl-tRNA(Gln) + L-glutamate + ADP + phosphate + H(+). Allows the formation of correctly charged Gln-tRNA(Gln) through the transamidation of misacylated Glu-tRNA(Gln) in organisms which lack glutaminyl-tRNA synthetase. The reaction takes place in the presence of glutamine and ATP through an activated gamma-phospho-Glu-tRNA(Gln). The protein is Glutamyl-tRNA(Gln) amidotransferase subunit A of Brachyspira hyodysenteriae (strain ATCC 49526 / WA1).